The following is a 414-amino-acid chain: Probable sugar phosphate/phosphate translocator At1g06470 (414 aa).

9 helical membrane passes run 72 to 92, 101 to 121, 172 to 192, 197 to 217, 224 to 244, 259 to 279, 303 to 323, 328 to 348, and 354 to 374; these read VLKT…LTLY, LGKF…QAVL, TFAT…AFAF, PSLK…LTVA, FWGF…WCMT, FIFM…LSLL, FLML…YVLV, AVTV…VAVF, and FTWL…LFNW. In terms of domain architecture, EamA spans 106-216; it reads APLLMNTIHF…VISAGVLLTV (111 aa).

The protein belongs to the TPT transporter family. TPT (TC 2.A.7.9) subfamily.

It is found in the membrane. In Arabidopsis thaliana (Mouse-ear cress), this protein is Probable sugar phosphate/phosphate translocator At1g06470.